The following is a 341-amino-acid chain: MLSRISSVRIGTQVRQLANPVVNQSSQVLQTRQFYVAAALTVGSMIFGKQNKLADSIANGEVHDKTVDYEARHQEALEKRLKTLTDTRPMKPRYEGHIPLNLHEKLLLFVISGIRSYYHPENGVNIVQLGEATALPFILEDLKKTMLSDETGRRILREKPNVRTETLDMDKLSKMPKNTFGYTFYSWLKKEGVSPDTRAPVKYIDDPDHAFIFKRYRQCHDFYHSLNDLPIIIEGEIAVKALEAANMGIPMAALGTLLAPLRLKSAQRQRLYEIYLPWAIRTGLSCKPLINVYWEELLDKDVNELRKELGITPPPDLRKIRKERAALRKKFKMKYESYEKQ.

A mitochondrion-targeting transit peptide spans 1–16 (MLSRISSVRIGTQVRQ). Zn(2+) contacts are provided by histidine 220, aspartate 221, histidine 224, and glutamate 236.

It belongs to the COQ4 family. In terms of assembly, component of a multi-subunit COQ enzyme complex, composed of at least COQ3, COQ4, COQ5, COQ6, COQ7 and COQ9. Requires Zn(2+) as cofactor.

The protein resides in the mitochondrion inner membrane. It carries out the reaction a 4-hydroxy-3-methoxy-5-(all-trans-polyprenyl)benzoate + H(+) = a 2-methoxy-6-(all-trans-polyprenyl)phenol + CO2. Its pathway is cofactor biosynthesis; ubiquinone biosynthesis. Functionally, lyase that catalyzes the C1-decarboxylation of 4-hydroxy-3-methoxy-5-(all-trans-polyprenyl)benzoic acid into 2-methoxy-6-(all-trans-polyprenyl)phenol during ubiquinone biosynthesis. The chain is Ubiquinone biosynthesis protein COQ4, mitochondrial from Vanderwaltozyma polyspora (strain ATCC 22028 / DSM 70294 / BCRC 21397 / CBS 2163 / NBRC 10782 / NRRL Y-8283 / UCD 57-17) (Kluyveromyces polysporus).